The chain runs to 292 residues: MRLDVITIFPEYLDPLRHALLGKAIEKDLLSVGVHDLRLWAEDAHKSVDDSPFGGGPGMVMKPTVWGPALDDVATMSGKAHMGAQLDSARVHVDKPRHDELEGIQFAGYDAAEVAEADKPLLLVPTPAGAPFTQEDARAWSNEEHIVFACGRYEGIDQRVIEDAKKTYRVREVSIGDYVLIGGEVAVLVIAEAVVRLIPGVLGNTQSHQDDSFSDGLLEGPSYTKPREWRGLEVPEVLTSGNHAKIERWRREQSLKRTWEVRPELLDGMELDRHDQAYVEGLRRGNTSDNLN.

S-adenosyl-L-methionine-binding positions include G151 and 175 to 180 (IGDYVL).

This sequence belongs to the RNA methyltransferase TrmD family. As to quaternary structure, homodimer.

The protein localises to the cytoplasm. The catalysed reaction is guanosine(37) in tRNA + S-adenosyl-L-methionine = N(1)-methylguanosine(37) in tRNA + S-adenosyl-L-homocysteine + H(+). Its function is as follows. Specifically methylates guanosine-37 in various tRNAs. The sequence is that of tRNA (guanine-N(1)-)-methyltransferase from Corynebacterium diphtheriae (strain ATCC 700971 / NCTC 13129 / Biotype gravis).